Reading from the N-terminus, the 822-residue chain is ATP-dependent zinc metalloprotease FTSH 8, mitochondrial (822 aa).

Positions 1–25 (MSLASLARALSRRSAPSSSRARQGF) are enriched in low complexity. Disordered stretches follow at residues 1-50 (MSLA…LHGG), 103-131 (NYYP…STDD), and 202-221 (SSPQ…TTND). The transit peptide at 1 to 93 (MSLASLARAL…LANPQFRRLF (93 aa)) directs the protein to the mitochondrion. The span at 108–127 (GKKEAPKGDGSNKSDSKQDS) shows a compositional bias: basic and acidic residues. 375–382 (GPPGTGKT) provides a ligand contact to ATP. Position 600 (histidine 600) interacts with Zn(2+). Residue glutamate 601 is part of the active site. Histidine 604 and aspartate 676 together coordinate Zn(2+). A disordered region spans residues 781-822 (PTNYDLFKQGFQDEEDSKNQEAAKTPQPDDDGTPSLGEVVPT).

The protein in the N-terminal section; belongs to the AAA ATPase family. In the C-terminal section; belongs to the peptidase M41 family. Zn(2+) is required as a cofactor.

It is found in the mitochondrion. In terms of biological role, probable ATP-dependent zinc metallopeptidase. The sequence is that of ATP-dependent zinc metalloprotease FTSH 8, mitochondrial (FTSH8) from Oryza sativa subsp. japonica (Rice).